A 364-amino-acid chain; its full sequence is Palmitoyltransferase ZDHHC9 (364 aa).

At 1–35 (MSVMVVRKKVTRKWEKLPGRNTFCCDGRVMMARQK) the chain is on the cytoplasmic side. The chain crosses the membrane as a helical span at residues 36-56 (GIFYLTLFLILGTCTLFFAFE). Residues 57–63 (CRYLAVQ) lie on the Lumenal side of the membrane. Residues 64 to 84 (LSPAIPVFAAMLFLFSMATLL) traverse the membrane as a helical segment. The Cytoplasmic segment spans residues 85–183 (RTSFSDPGVI…NCVGKRNYRY (99 aa)). A DHHC domain is found at 139–189 (KYCYTCKIFRPPRASHCSICDNCVERFDHHCPWVGNCVGKRNYRYFYLFIL). Catalysis depends on C169, which acts as the S-palmitoyl cysteine intermediate. Residues 184-204 (FYLFILSLSLLTIYVFAFNIV) form a helical membrane-spanning segment. Residues 205 to 228 (YVALKSLKIGFLETLKETPGTVLE) lie on the Lumenal side of the membrane. The chain crosses the membrane as a helical span at residues 229-249 (VLICFFTLWSVVGLTGFHTFL). Residues 250–364 (VALNQTTNED…PPQEASEAEK (115 aa)) are Cytoplasmic-facing. The disordered stretch occupies residues 303 to 364 (PLEESGSRPP…PPQEASEAEK (62 aa)). A compositionally biased stretch (polar residues) spans 310-336 (RPPSTQETSSSLLPQSPASTEHMNSNE). A compositionally biased stretch (pro residues) spans 346–356 (EMPPPEPPEPP).

The protein belongs to the DHHC palmitoyltransferase family. ERF2/ZDHHC9 subfamily. As to quaternary structure, interacts with GOLGA7.

The protein resides in the endoplasmic reticulum membrane. It localises to the golgi apparatus membrane. The catalysed reaction is L-cysteinyl-[protein] + hexadecanoyl-CoA = S-hexadecanoyl-L-cysteinyl-[protein] + CoA. Its function is as follows. Palmitoyltransferase that catalyzes the addition of palmitate onto various protein substrates, such as ADRB2, GSDMD, HRAS, NRAS and CGAS. The ZDHHC9-GOLGA7 complex is a palmitoyltransferase specific for HRAS and NRAS. May have a palmitoyltransferase activity toward the beta-2 adrenergic receptor/ADRB2 and therefore regulate G protein-coupled receptor signaling. Acts as a regulator of innate immunity by catalyzing palmitoylation of CGAS, thereby promoting CGAS homodimerization and cyclic GMP-AMP synthase activity. Activates pyroptosis by catalyzing palmitoylation of gasdermin-D (GSDMD), thereby promoting membrane translocation and pore formation of GSDMD. In Mus musculus (Mouse), this protein is Palmitoyltransferase ZDHHC9 (Zdhhc9).